The following is a 259-amino-acid chain: Small ribosomal subunit protein uS2 (259 aa).

This sequence belongs to the universal ribosomal protein uS2 family.

This chain is Small ribosomal subunit protein uS2, found in Streptococcus pneumoniae serotype 4 (strain ATCC BAA-334 / TIGR4).